Here is a 378-residue protein sequence, read N- to C-terminus: Transcription initiation factor IIA subunit 1 (378 aa).

At Ala2 the chain carries N-acetylalanine. 3 stretches are compositionally biased toward low complexity: residues Gln69–Gln79, Gln89–Val106, and Pro247–Thr281. Disordered regions lie at residues Gln69–Ile108 and Pro247–Phe331. A phosphoserine; by TAF1 mark is found at Ser282, Ser283, Ser318, and Ser323. Positions Ser282–Phe331 are enriched in acidic residues. DNA contacts are provided by His345 and Arg346.

This sequence belongs to the TFIIA subunit 1 family. As to quaternary structure, TFIIA is a heterodimer of the large unprocessed subunit 1 and a small subunit gamma. It was originally believed to be a heterotrimer of an alpha (p35), a beta (p19) and a gamma subunit (p12). TFIIA forms a complex with TBP. Part of TBP-based Pol II pre-initiation complex (PIC), in which Pol II core assembles with general transcription factors and other specific initiation factors including GTF2E1, GTF2E2, GTF2F1, GTF2F2, TCEA1, ERCC2, ERCC3, GTF2H2, GTF2H3, GTF2H4, GTF2H5, GTF2A1, GTF2A2, GTF2B and TBP; this large multi-subunit PIC complex mediates DNA unwinding and targets Pol II core to the transcription start site where the first phosphodiester bond forms. In terms of processing, the alpha and beta subunits are postranslationally produced from the precursor form by TASP1. The cleavage promotes proteasomal degradation. In terms of tissue distribution, expressed in pachytene spermatocytes and spermatids.

Its subcellular location is the nucleus. Its function is as follows. TFIIA is a component of the transcription machinery of RNA polymerase II and plays an important role in transcriptional activation. TFIIA in a complex with TBP mediates transcriptional activity. The protein is Transcription initiation factor IIA subunit 1 (Gtf2a1) of Mus musculus (Mouse).